The following is a 40-amino-acid chain: Large ribosomal subunit protein bL36 (40 aa).

The protein belongs to the bacterial ribosomal protein bL36 family.

The sequence is that of Large ribosomal subunit protein bL36 from Corynebacterium jeikeium (strain K411).